A 399-amino-acid chain; its full sequence is UDP-galactopyranose mutase (399 aa).

FAD contacts are provided by F18, E38, N46, and L66. Residues F157, T162, W166, and Y191 each coordinate UDP-alpha-D-galactose. 224 to 225 (DW) contributes to the FAD binding site. 3 residues coordinate UDP-alpha-D-galactose: N282, R292, and Y328. Residue R360 coordinates FAD. Residue Y366 coordinates UDP-alpha-D-galactose. Residue 367–369 (LDM) coordinates FAD.

The protein belongs to the UDP-galactopyranose/dTDP-fucopyranose mutase family. In terms of assembly, homotetramer. The cofactor is FAD.

It carries out the reaction UDP-alpha-D-galactose = UDP-alpha-D-galactofuranose. It participates in cell wall biogenesis; cell wall polysaccharide biosynthesis. In terms of biological role, catalyzes the interconversion through a 2-keto intermediate of uridine diphosphogalactopyranose (UDP-GalP) into uridine diphosphogalactofuranose (UDP-GalF) which is a key building block for cell wall construction in Mycobacterium tuberculosis. This is UDP-galactopyranose mutase (glf) from Mycobacterium tuberculosis (strain CDC 1551 / Oshkosh).